A 95-amino-acid polypeptide reads, in one-letter code: Small ribosomal subunit protein uS19 (95 aa).

It belongs to the universal ribosomal protein uS19 family.

Its function is as follows. Protein S19 forms a complex with S13 that binds strongly to the 16S ribosomal RNA. This Chloroflexus aggregans (strain MD-66 / DSM 9485) protein is Small ribosomal subunit protein uS19.